Consider the following 462-residue polypeptide: Tryptophan dimethylallyltransferase ifgA (462 aa).

Residues 83–84 (IL) and Glu92 each bind L-tryptophan. Residues Arg103, Lys189, and Tyr191 each coordinate substrate. L-tryptophan-binding residues include Tyr193 and Arg246. Substrate-binding residues include Arg259, Lys261, Tyr263, Gln345, and Tyr347.

Belongs to the tryptophan dimethylallyltransferase family. In terms of assembly, homodimer.

The enzyme catalyses L-tryptophan + dimethylallyl diphosphate = 4-(3-methylbut-2-enyl)-L-tryptophan + diphosphate. Its pathway is alkaloid biosynthesis; ergot alkaloid biosynthesis. Tryptophan dimethylallyltransferase; part of the gene cluster that mediates the biosynthesis of isofumigaclavines, fungal ergot alkaloids. The tryptophan dimethylallyltransferase ifgA catalyzes the first step of ergot alkaloid biosynthesis by condensing dimethylallyl diphosphate (DMAP) and tryptophan to form 4-dimethylallyl-L-tryptophan. The second step is catalyzed by the methyltransferase ifgB that methylates 4-dimethylallyl-L-tryptophan in the presence of S-adenosyl-L-methionine, resulting in the formation of N-methyl-dimethylallyl-L-tryptophan. The catalase ifgD and the FAD-dependent oxidoreductase ifgC then transform N-methyl-dimethylallyl-L-tryptophan to chanoclavine-I which is further oxidized by ifgE in the presence of NAD(+), resulting in the formation of chanoclavine-I aldehyde. The chanoclavine-I aldehyde reductases ifgG and/or fgaOx3 reduce chanoclavine-I aldehyde to dihydrochanoclavine-I aldehyde that spontaneously dehydrates to form 6,8-dimethyl-6,7-didehydroergoline. The festuclavine dehydrogenases ifgF1 and/or ifgF2 then catalyze the reduction of 6,8-dimethyl-6,7-didehydroergoline to form festuclavine. Hydrolysis of festuclavine by a yet undetermined cytochrome P450 monooxygenase (called ifgH) then leads to the formation of isofumigaclavine B which is in turn acetylated by ifgI to isofumigaclavine A. Penicillium roqueforti has interestingly at least two sets of genes for the consumption of chanoclavine-I aldehyde on three different loci, the OYEs ifgG/fgaOx3 and the festuclavine synthase homologs ifgF1/ifgF2. The reason for the duplication of these genes is unclear, probably to ensure the conversion of chanoclavine-I aldehyde by differential gene expression under various environmental conditions. This is Tryptophan dimethylallyltransferase ifgA from Penicillium roqueforti (strain FM164).